The sequence spans 412 residues: L-cysteine:1D-myo-inositol 2-amino-2-deoxy-alpha-D-glucopyranoside ligase (412 aa).

Cysteine 44 contacts Zn(2+). L-cysteinyl-5'-AMP-binding positions include 44 to 47 (CGIT), threonine 59, and 82 to 84 (NVT). Positions 46–56 (ITPYDATHLGH) match the 'HIGH' region motif. The short motif at 187–192 (QSGGDP) is the 'ERGGDP' region element. L-cysteinyl-5'-AMP is bound at residue tryptophan 227. Residue cysteine 231 coordinates Zn(2+). An L-cysteinyl-5'-AMP-binding site is contributed by 249–251 (GSD). Histidine 256 is a binding site for Zn(2+). L-cysteinyl-5'-AMP is bound at residue isoleucine 283. The short motif at 289 to 293 (KMSKS) is the 'KMSKS' region element.

Belongs to the class-I aminoacyl-tRNA synthetase family. MshC subfamily. As to quaternary structure, monomer. Requires Zn(2+) as cofactor.

It catalyses the reaction 1D-myo-inositol 2-amino-2-deoxy-alpha-D-glucopyranoside + L-cysteine + ATP = 1D-myo-inositol 2-(L-cysteinylamino)-2-deoxy-alpha-D-glucopyranoside + AMP + diphosphate + H(+). Functionally, catalyzes the ATP-dependent condensation of GlcN-Ins and L-cysteine to form L-Cys-GlcN-Ins. The polypeptide is L-cysteine:1D-myo-inositol 2-amino-2-deoxy-alpha-D-glucopyranoside ligase (mshC) (Mycobacterium leprae (strain TN)).